The chain runs to 91 residues: Probable Fe(2+)-trafficking protein (91 aa).

It belongs to the Fe(2+)-trafficking protein family.

Its function is as follows. Could be a mediator in iron transactions between iron acquisition and iron-requiring processes, such as synthesis and/or repair of Fe-S clusters in biosynthetic enzymes. This chain is Probable Fe(2+)-trafficking protein, found in Burkholderia multivorans (strain ATCC 17616 / 249).